We begin with the raw amino-acid sequence, 79 residues long: Sec-independent protein translocase protein TatA (79 aa).

Residues 1 to 21 (MGSLSIWHWLIVLLIVALVFG) form a helical membrane-spanning segment. Residues 46 to 79 (ADAPAAEAQQRELPRNGAVDVEAKEKTPRSGDYR) form a disordered region. The span at 66 to 79 (VEAKEKTPRSGDYR) shows a compositional bias: basic and acidic residues.

Belongs to the TatA/E family. In terms of assembly, the Tat system comprises two distinct complexes: a TatABC complex, containing multiple copies of TatA, TatB and TatC subunits, and a separate TatA complex, containing only TatA subunits. Substrates initially bind to the TatABC complex, which probably triggers association of the separate TatA complex to form the active translocon.

It localises to the cell inner membrane. Part of the twin-arginine translocation (Tat) system that transports large folded proteins containing a characteristic twin-arginine motif in their signal peptide across membranes. TatA could form the protein-conducting channel of the Tat system. The chain is Sec-independent protein translocase protein TatA from Paraburkholderia phytofirmans (strain DSM 17436 / LMG 22146 / PsJN) (Burkholderia phytofirmans).